The following is a 188-amino-acid chain: Peptide deformylase (188 aa).

The Fe cation site is built by C107 and H149. E150 is an active-site residue. Fe cation is bound at residue H153.

It belongs to the polypeptide deformylase family. It depends on Fe(2+) as a cofactor.

It catalyses the reaction N-terminal N-formyl-L-methionyl-[peptide] + H2O = N-terminal L-methionyl-[peptide] + formate. Removes the formyl group from the N-terminal Met of newly synthesized proteins. Requires at least a dipeptide for an efficient rate of reaction. N-terminal L-methionine is a prerequisite for activity but the enzyme has broad specificity at other positions. This chain is Peptide deformylase, found in Thermosynechococcus vestitus (strain NIES-2133 / IAM M-273 / BP-1).